The chain runs to 102 residues: Putative UPF0320 protein YMR326C (102 aa).

Belongs to the UPF0320 family.

The protein is Putative UPF0320 protein YMR326C of Saccharomyces cerevisiae (strain ATCC 204508 / S288c) (Baker's yeast).